The chain runs to 343 residues: Phosphoribosylformylglycinamidine cyclo-ligase (343 aa).

Belongs to the AIR synthase family.

It localises to the cytoplasm. It carries out the reaction 2-formamido-N(1)-(5-O-phospho-beta-D-ribosyl)acetamidine + ATP = 5-amino-1-(5-phospho-beta-D-ribosyl)imidazole + ADP + phosphate + H(+). The protein operates within purine metabolism; IMP biosynthesis via de novo pathway; 5-amino-1-(5-phospho-D-ribosyl)imidazole from N(2)-formyl-N(1)-(5-phospho-D-ribosyl)glycinamide: step 2/2. In Thermodesulfovibrio yellowstonii (strain ATCC 51303 / DSM 11347 / YP87), this protein is Phosphoribosylformylglycinamidine cyclo-ligase.